Consider the following 352-residue polypeptide: Nuclear receptor subfamily 1 group I member 3 (352 aa).

The nuclear receptor DNA-binding region spans L8–S83. Residues C11–C31 form an NR C4-type zinc finger. T38 carries the phosphothreonine; by PKC modification. An NR C4-type zinc finger spans residues C47 to C71. The NR LBD domain maps to E109–S352.

Belongs to the nuclear hormone receptor family. NR1 subfamily. Heterodimer of NR1I3 and RXR. Interacts with PSMC4. Interacts with ECT2. Directly interacts with DNAJC7; this complex may also include HSP90. Interacts with CRY1. Interacts with CRY2 in a ligand-dependent manner. In terms of processing, phosphorylated at Thr-38 by PKC, dephosphorylation of Thr-38 is required for nuclear translocation and activation.

It is found in the nucleus. The protein localises to the cytoplasm. It localises to the cytoskeleton. Its function is as follows. Binds and transactivates the retinoic acid response elements that control expression of the retinoic acid receptor beta 2 and alcohol dehydrogenase 3 genes. Transactivates both the phenobarbital responsive element module of the human CYP2B6 gene and the CYP3A4 xenobiotic response element. The protein is Nuclear receptor subfamily 1 group I member 3 (NR1I3) of Macaca mulatta (Rhesus macaque).